The chain runs to 324 residues: tRNA U34 carboxymethyltransferase (324 aa).

Carboxy-S-adenosyl-L-methionine contacts are provided by residues K92, W106, K111, G131, 153–155 (DPT), 181–182 (IE), M197, Y201, and R316.

This sequence belongs to the class I-like SAM-binding methyltransferase superfamily. CmoB family. Homotetramer.

It carries out the reaction carboxy-S-adenosyl-L-methionine + 5-hydroxyuridine(34) in tRNA = 5-carboxymethoxyuridine(34) in tRNA + S-adenosyl-L-homocysteine + H(+). Catalyzes carboxymethyl transfer from carboxy-S-adenosyl-L-methionine (Cx-SAM) to 5-hydroxyuridine (ho5U) to form 5-carboxymethoxyuridine (cmo5U) at position 34 in tRNAs. This is tRNA U34 carboxymethyltransferase from Methylococcus capsulatus (strain ATCC 33009 / NCIMB 11132 / Bath).